A 202-amino-acid chain; its full sequence is Superoxide dismutase [Mn/Fe] (202 aa).

Residues His26, His80, Asp163, and His167 each contribute to the Fe(3+) site. Residues His26, His80, Asp163, and His167 each coordinate Mn(2+).

This sequence belongs to the iron/manganese superoxide dismutase family. As to quaternary structure, homodimer. It depends on Mn(2+) as a cofactor. The cofactor is Fe(3+).

The enzyme catalyses 2 superoxide + 2 H(+) = H2O2 + O2. Its function is as follows. Destroys superoxide anion radicals which are normally produced within the cells and which are toxic to biological systems. Catalyzes the dismutation of superoxide anion radicals into O2 and H2O2 by successive reduction and oxidation of the transition metal ion at the active site. This chain is Superoxide dismutase [Mn/Fe] (sodB), found in Methylomonas sp. (strain J).